The chain runs to 504 residues: UNC93-like protein C922.05c (504 aa).

Helical transmembrane passes span 64–84, 97–116, 123–145, 149–169, 186–206, 219–239, 275–293, 310–330, 343–363, 391–411, and 452–472; these read IIVS…SGLG, ANVA…GSIC, LTLA…YKHV, GFVI…WAAQ, IAIF…VPLA, GTYA…LFMV, YWVL…FTTY, LNNL…ALFL, VGWG…LAFQ, FLYI…YWII, and YFAS…PVIW.

Belongs to the unc-93 family.

The protein localises to the cytoplasm. The protein resides in the membrane. This Schizosaccharomyces pombe (strain 972 / ATCC 24843) (Fission yeast) protein is UNC93-like protein C922.05c.